A 307-amino-acid polypeptide reads, in one-letter code: Furaquinocin biosynthesis prenyltransferase (307 aa).

This sequence belongs to the aromatic prenyltransferase family. In terms of assembly, monomer.

The enzyme catalyses 2-O,3-dimethylflaviolin + (2E)-geranyl diphosphate = 6-linalyl-2-O,3-dimethylflaviolin + diphosphate. It catalyses the reaction 2-O,3-dimethylflaviolin + (2E)-geranyl diphosphate + H(+) = 7-O-geranyl-2-O,3-dimethylflaviolin + diphosphate. Its activity is regulated as follows. Does not require any metal cations for activity. In terms of biological role, involved in the biosynthesis of furaquinocin. Catalyzes the transfer of a geranyl group to 2-methoxy-3-methyl-flaviolin to yield 6-prenyl-2-methoxy-3-methyl-flaviolin and 7-O-geranyl-2-methoxy-3-methyl-flaviolin in a 10:1 ratio. Can also use other substrates such as flaviolin or 1,3-dihydroxy naphthalene, and can also use DMAPP as prenyl donor. The polypeptide is Furaquinocin biosynthesis prenyltransferase (Streptomyces sp. (strain KO-3988)).